The primary structure comprises 860 residues: Leucine--tRNA ligase (860 aa).

Residues 42 to 52 carry the 'HIGH' region motif; sequence PYPSGRLHMGH. A 'KMSKS' region motif is present at residues 619–623; the sequence is KMSKS. An ATP-binding site is contributed by Lys-622.

The protein belongs to the class-I aminoacyl-tRNA synthetase family.

Its subcellular location is the cytoplasm. It catalyses the reaction tRNA(Leu) + L-leucine + ATP = L-leucyl-tRNA(Leu) + AMP + diphosphate. The chain is Leucine--tRNA ligase from Yersinia pseudotuberculosis serotype I (strain IP32953).